We begin with the raw amino-acid sequence, 432 residues long: Glutamyl-tRNA reductase (432 aa).

Substrate-binding positions include T55 to R58, S114, E119 to Q121, and Q125. The active-site Nucleophile is C56. G194 to I199 provides a ligand contact to NADP(+).

It belongs to the glutamyl-tRNA reductase family. As to quaternary structure, homodimer.

It carries out the reaction (S)-4-amino-5-oxopentanoate + tRNA(Glu) + NADP(+) = L-glutamyl-tRNA(Glu) + NADPH + H(+). Its pathway is porphyrin-containing compound metabolism; protoporphyrin-IX biosynthesis; 5-aminolevulinate from L-glutamyl-tRNA(Glu): step 1/2. Its function is as follows. Catalyzes the NADPH-dependent reduction of glutamyl-tRNA(Glu) to glutamate 1-semialdehyde (GSA). This Burkholderia ambifaria (strain ATCC BAA-244 / DSM 16087 / CCUG 44356 / LMG 19182 / AMMD) (Burkholderia cepacia (strain AMMD)) protein is Glutamyl-tRNA reductase.